We begin with the raw amino-acid sequence, 536 residues long: Sensory rhodopsin I transducer (536 aa).

Residues T2 to L14 are Cytoplasmic-facing. The helical transmembrane segment at G15 to G29 threads the bilayer. Over V30–I39 the chain is Extracellular. A helical membrane pass occupies residues V40–A55. The 53-residue stretch at A55–N107 folds into the HAMP 1 domain. Residues E56–A536 are Cytoplasmic-facing. The interval L116–R145 is disordered. Positions E124–R145 are enriched in basic and acidic residues. The 54-residue stretch at A149–R202 folds into the HAMP 2 domain. The Methyl-accepting transducer domain maps to T221 to A459. At E266 the chain carries Glutamate methyl ester (Glu). The interval S278 to D307 is disordered. A compositionally biased stretch (basic and acidic residues) spans A287–L296. E473 is subject to Glutamate methyl ester (Glu). Positions T512–A536 are disordered.

The protein belongs to the methyl-accepting chemotaxis (MCP) protein family. Post-translationally, methylated by CheR.

The protein resides in the cell membrane. Its function is as follows. Transduces signals from the phototaxis receptor sensory rhodopsin I (SR-I) to the flagellar motor. Responds to light changes through the variation of the level of methylation. The protein is Sensory rhodopsin I transducer (htr1) of Halobacterium salinarum (strain ATCC 29341 / DSM 671 / R1).